The primary structure comprises 219 residues: Small ribosomal subunit protein uS3c (219 aa).

The region spanning 39-109 is the KH type-2 domain; it reads IRQYIEKNLS…QIRINVIEVK (71 aa).

It belongs to the universal ribosomal protein uS3 family. As to quaternary structure, part of the 30S ribosomal subunit.

The protein resides in the plastid. It localises to the cyanelle. The protein is Small ribosomal subunit protein uS3c (rps3) of Cyanophora paradoxa.